The primary structure comprises 363 residues: Cytoplasmic tRNA 2-thiolation protein 1 (363 aa).

The tract at residues 340-363 is disordered; it reads ASLNGTPRTPPTPAEPVEGIERAA.

The protein belongs to the TtcA family. CTU1/NCS6/ATPBD3 subfamily.

Its subcellular location is the cytoplasm. It functions in the pathway tRNA modification; 5-methoxycarbonylmethyl-2-thiouridine-tRNA biosynthesis. Plays a central role in 2-thiolation of mcm(5)S(2)U at tRNA wobble positions of tRNA(Lys), tRNA(Glu) and tRNA(Gln). Directly binds tRNAs and probably acts by catalyzing adenylation of tRNAs, an intermediate required for 2-thiolation. It is unclear whether it acts as a sulfurtransferase that transfers sulfur from thiocarboxylated URM1 onto the uridine of tRNAs at wobble position. Prior mcm(5) tRNA modification by the elongator complex is required for 2-thiolation. May also be involved in protein urmylation. The chain is Cytoplasmic tRNA 2-thiolation protein 1 from Cryptococcus neoformans var. neoformans serotype D (strain B-3501A) (Filobasidiella neoformans).